Reading from the N-terminus, the 360-residue chain is MKKHNFTAGPCILNDLVLKDAASACLNFAGTGLSVLEVSHRDKEFDAVMLEARNLFKELLDVPEGYEVLFLGGGASLQFYQVPLNLLKKKAAFINTGTWATNAIKQAKIMTQVYGGEVEVLASSEDKNFSYIPKDFVIPEDVDYFHFTTNNTIYGTEIRKDFDTKTRLVADMSSDIFSRPIDVSKYDLIYGGAQKNIGPAGATFVLVKTDVLGQVDRPLPDMLNYQIHIKKDSMFNTPPVFPVYVALQTMKWYKELGGVKVLEKMNLDKAALIYDAIDSSKIFRGTVNPEDRSIMNACFVMKDEYKELEKEFATFAASRGMVGIKGHRSVGGFRASLYNALPIESVQSLVSVMKEFEAKH.

Position 41 (Arg-41) interacts with L-glutamate. Residues 75-76 (AS), Trp-99, Thr-152, Asp-171, and Gln-194 each bind pyridoxal 5'-phosphate. Lys-195 bears the N6-(pyridoxal phosphate)lysine mark. Pyridoxal 5'-phosphate is bound at residue 236-237 (NT).

This sequence belongs to the class-V pyridoxal-phosphate-dependent aminotransferase family. SerC subfamily. In terms of assembly, homodimer. Pyridoxal 5'-phosphate is required as a cofactor.

It localises to the cytoplasm. It carries out the reaction O-phospho-L-serine + 2-oxoglutarate = 3-phosphooxypyruvate + L-glutamate. The enzyme catalyses 4-(phosphooxy)-L-threonine + 2-oxoglutarate = (R)-3-hydroxy-2-oxo-4-phosphooxybutanoate + L-glutamate. It functions in the pathway amino-acid biosynthesis; L-serine biosynthesis; L-serine from 3-phospho-D-glycerate: step 2/3. It participates in cofactor biosynthesis; pyridoxine 5'-phosphate biosynthesis; pyridoxine 5'-phosphate from D-erythrose 4-phosphate: step 3/5. Functionally, catalyzes the reversible conversion of 3-phosphohydroxypyruvate to phosphoserine and of 3-hydroxy-2-oxo-4-phosphonooxybutanoate to phosphohydroxythreonine. The polypeptide is Phosphoserine aminotransferase (Porphyromonas gingivalis (strain ATCC 33277 / DSM 20709 / CIP 103683 / JCM 12257 / NCTC 11834 / 2561)).